The primary structure comprises 218 residues: Ras-related protein Rab-27B (218 aa).

Residue Thr2 is modified to N-acetylthreonine. 16 to 24 (GDSGVGKTT) contacts GTP. The short motif at 38–46 (FITTVGIDF) is the Effector region element. GTP contacts are provided by residues 74–78 (DTAGQ), 133–136 (NKAD), and 163–165 (SAA). A disulfide bond links Cys123 and Cys188. The interval 193-218 (HIPDTVNGSSSGKLDGEKSAEKKCAC) is disordered. The span at 206 to 218 (LDGEKSAEKKCAC) shows a compositional bias: basic and acidic residues. Residues Cys216 and Cys218 are each lipidated (S-geranylgeranyl cysteine). A Cysteine methyl ester modification is found at Cys218.

It belongs to the small GTPase superfamily. Rab family. Interacts with SYTL2, SYTL4, MYRIP and MLPH. Interacts with RPH3A and RPH3A. Interacts (GDP-bound form preferentially) with DENND10. In terms of tissue distribution, expressed at an extraordinary high level (0.1% of total protein) in urothelium.

The protein resides in the membrane. It localises to the late endosome. It carries out the reaction GTP + H2O = GDP + phosphate + H(+). With respect to regulation, regulated by guanine nucleotide exchange factors (GEFs) which promote the exchange of bound GDP for free GTP, GTPase activating proteins (GAPs) which increase the GTP hydrolysis activity, and GDP dissociation inhibitors which inhibit the dissociation of the nucleotide from the GTPase. Activated by GEFs such as DENND10. In terms of biological role, small GTPase which cycles between active GTP-bound and inactive GDP-bound states. In its active state, binds to a variety of effector proteins to regulate homeostasis of late endocytic pathway, including endosomal positioning, maturation and secretion. Plays a role in NTRK2/TRKB axonal anterograde transport by facilitating the association of NTRK2/TRKB with KLC1. May be involved in targeting uroplakins to urothelial apical membranes. The sequence is that of Ras-related protein Rab-27B (RAB27B) from Bos taurus (Bovine).